Here is a 220-residue protein sequence, read N- to C-terminus: uncharacterized protein (220 aa).

This is an uncharacterized protein from Sinorhizobium fredii (strain NBRC 101917 / NGR234).